The chain runs to 637 residues: Chaperone protein HtpG (637 aa).

The a; substrate-binding stretch occupies residues 1-330 (MATAPASHAF…TEDLPLNISR (330 aa)). The b stretch occupies residues 331 to 551 (ETLQENVVVR…GGASTSSMDR (221 aa)). Residues 552 to 637 (LLRVLHKDES…GDWYKAVRGL (86 aa)) form a c region.

Belongs to the heat shock protein 90 family. Homodimer.

It localises to the cytoplasm. Functionally, molecular chaperone. Has ATPase activity. This chain is Chaperone protein HtpG, found in Nitratidesulfovibrio vulgaris (strain ATCC 29579 / DSM 644 / CCUG 34227 / NCIMB 8303 / VKM B-1760 / Hildenborough) (Desulfovibrio vulgaris).